We begin with the raw amino-acid sequence, 612 residues long: Dihydroxy-acid dehydratase (612 aa).

Asp-81 contributes to the Mg(2+) binding site. Cys-122 is a binding site for [2Fe-2S] cluster. Residues Asp-123 and Lys-124 each coordinate Mg(2+). Lys-124 carries the N6-carboxylysine modification. Cys-193 is a [2Fe-2S] cluster binding site. Glu-489 contacts Mg(2+). Ser-515 serves as the catalytic Proton acceptor.

This sequence belongs to the IlvD/Edd family. As to quaternary structure, homodimer. The cofactor is [2Fe-2S] cluster. Mg(2+) serves as cofactor.

It catalyses the reaction (2R)-2,3-dihydroxy-3-methylbutanoate = 3-methyl-2-oxobutanoate + H2O. The enzyme catalyses (2R,3R)-2,3-dihydroxy-3-methylpentanoate = (S)-3-methyl-2-oxopentanoate + H2O. Its pathway is amino-acid biosynthesis; L-isoleucine biosynthesis; L-isoleucine from 2-oxobutanoate: step 3/4. The protein operates within amino-acid biosynthesis; L-valine biosynthesis; L-valine from pyruvate: step 3/4. In terms of biological role, functions in the biosynthesis of branched-chain amino acids. Catalyzes the dehydration of (2R,3R)-2,3-dihydroxy-3-methylpentanoate (2,3-dihydroxy-3-methylvalerate) into 2-oxo-3-methylpentanoate (2-oxo-3-methylvalerate) and of (2R)-2,3-dihydroxy-3-methylbutanoate (2,3-dihydroxyisovalerate) into 2-oxo-3-methylbutanoate (2-oxoisovalerate), the penultimate precursor to L-isoleucine and L-valine, respectively. In Xanthomonas euvesicatoria pv. vesicatoria (strain 85-10) (Xanthomonas campestris pv. vesicatoria), this protein is Dihydroxy-acid dehydratase.